The chain runs to 288 residues: Syntaxin-1B (288 aa).

Residues M1–D13 show a composition bias toward basic and acidic residues. Positions M1 to V20 are disordered. At M1–K264 the chain is on the cytoplasmic side. Phosphoserine occurs at positions 10 and 14. A coiled-coil region spans residues M29–G104. The region spanning L191 to A253 is the t-SNARE coiled-coil homology domain. Residues I265–L288 form a helical; Anchor for type IV membrane protein membrane-spanning segment.

This sequence belongs to the syntaxin family. Interacts with OTOF. Interacts with SYT6 and SYT8; the interaction is Ca(2+)-dependent. In terms of processing, phosphorylated by CK2. Post-translationally, (Microbial infection) Targeted and hydrolyzed by C.botulinum neurotoxin type C (BoNT/C); cleavage by BoNT/C inhibits neurotransmitter release. Probably hydrolyzes the 252-Lys-|-Ala-253 bond.

It localises to the membrane. In terms of biological role, potentially involved in docking of synaptic vesicles at presynaptic active zones. May mediate Ca(2+)-regulation of exocytosis acrosomal reaction in sperm. This Bos taurus (Bovine) protein is Syntaxin-1B (STX1B).